A 1070-amino-acid polypeptide reads, in one-letter code: Potassium/chloride cotransporter 3 (1070 aa).

15 consecutive transmembrane segments (helical) span residues 92 to 112 (GVML…TMFI), 114 to 134 (LFWV…AICC), 142 to 162 (ISLS…YFII), 174 to 194 (VGIL…VGGV), 196 to 216 (VILM…LHDT), 228 to 248 (LYGT…VKFV), 251 to 271 (LAPV…GGGI), 400 to 420 (FFML…GTNM), 433 to 453 (VGTI…AILF), 473 to 493 (TMVV…GAFL), 534 to 554 (PFLG…LGAV), 557 to 577 (IAEV…LIAV), 600 to 620 (LLGA…LACI), 791 to 811 (LVLF…LIVT), and 827 to 847 (FIDI…AYLL).

In terms of tissue distribution, expressed in the amphid sheath glia and the cephalic sheath glia. Also expressed in the inner labial and outer labial sheath and socket glia and as well as phasmid sheath glia.

Its subcellular location is the cell membrane. Functionally, probable potassium/chloride cotransporter that functions in the amphid sheath glial cells to regulate thermotaxis behavior. By maintaining chloride homeostasis, negatively regulates guanylate cyclase gcy-8 in the thermosensory AFD neurons and thereby controls the microvilli receptive ending morphology of the AFD neurons and thermotaxis. Modulates the temperature-evoked neuronal activity of the AFD neurons such as calcium responses to temperature gradients. Might also play a role in the chemotaxis behavior mediated by the sensory neurons AWA and AWC. The polypeptide is Potassium/chloride cotransporter 3 (kcc-3) (Caenorhabditis elegans).